Reading from the N-terminus, the 155-residue chain is Ribosome maturation factor RimP (155 aa).

This sequence belongs to the RimP family.

The protein resides in the cytoplasm. Required for maturation of 30S ribosomal subunits. The chain is Ribosome maturation factor RimP from Phocaeicola vulgatus (strain ATCC 8482 / DSM 1447 / JCM 5826 / CCUG 4940 / NBRC 14291 / NCTC 11154) (Bacteroides vulgatus).